A 114-amino-acid chain; its full sequence is uncharacterized protein (114 aa).

Cys10 is a catalytic residue.

The protein belongs to the ArsC family.

This is an uncharacterized protein from Haemophilus influenzae (strain ATCC 51907 / DSM 11121 / KW20 / Rd).